Here is a 267-residue protein sequence, read N- to C-terminus: MFKLDLQPTEKLFIPFITAGDPVPEVSIELAKSLQKAGATALELGVAYSDPLADGPVIQRASKRALDQGMNIVKAIELGGEMKKNGVNIPIILFTYYNPVLQLNKEYFFALLQENHIDGLLVPDLPLEESNSLQEECKSHEVTYISLVAPTSESRLKTIIEQAEGFVYCVSSLGVTGVRNEFNSSVYPFIRTVKNLSTVPVAVGFGISNREQVIKMNEISDGVVVGSALVRKIEELKDRLISAETRNQALQEFEDYAMAFSGLYSLK.

Active-site proton acceptor residues include glutamate 43 and aspartate 54.

Belongs to the TrpA family. As to quaternary structure, tetramer of two alpha and two beta chains.

The enzyme catalyses (1S,2R)-1-C-(indol-3-yl)glycerol 3-phosphate + L-serine = D-glyceraldehyde 3-phosphate + L-tryptophan + H2O. It functions in the pathway amino-acid biosynthesis; L-tryptophan biosynthesis; L-tryptophan from chorismate: step 5/5. Functionally, the alpha subunit is responsible for the aldol cleavage of indoleglycerol phosphate to indole and glyceraldehyde 3-phosphate. This Bacillus subtilis subsp. natto protein is Tryptophan synthase alpha chain.